The primary structure comprises 485 residues: Glutamyl-tRNA(Gln) amidotransferase subunit A (485 aa).

Catalysis depends on charge relay system residues Lys-79 and Ser-154. The active-site Acyl-ester intermediate is the Ser-178.

The protein belongs to the amidase family. GatA subfamily. In terms of assembly, heterotrimer of A, B and C subunits.

The catalysed reaction is L-glutamyl-tRNA(Gln) + L-glutamine + ATP + H2O = L-glutaminyl-tRNA(Gln) + L-glutamate + ADP + phosphate + H(+). In terms of biological role, allows the formation of correctly charged Gln-tRNA(Gln) through the transamidation of misacylated Glu-tRNA(Gln) in organisms which lack glutaminyl-tRNA synthetase. The reaction takes place in the presence of glutamine and ATP through an activated gamma-phospho-Glu-tRNA(Gln). This is Glutamyl-tRNA(Gln) amidotransferase subunit A from Clostridium botulinum (strain Kyoto / Type A2).